The primary structure comprises 635 residues: 1-deoxy-D-xylulose-5-phosphate synthase (635 aa).

Thiamine diphosphate-binding positions include H77 and 118–120 (GHA). Position 149 (D149) interacts with Mg(2+). Thiamine diphosphate is bound by residues 150-151 (GS), N178, F290, and E375. N178 is a Mg(2+) binding site.

Belongs to the transketolase family. DXPS subfamily. In terms of assembly, homodimer. Mg(2+) serves as cofactor. The cofactor is thiamine diphosphate.

The catalysed reaction is D-glyceraldehyde 3-phosphate + pyruvate + H(+) = 1-deoxy-D-xylulose 5-phosphate + CO2. It functions in the pathway metabolic intermediate biosynthesis; 1-deoxy-D-xylulose 5-phosphate biosynthesis; 1-deoxy-D-xylulose 5-phosphate from D-glyceraldehyde 3-phosphate and pyruvate: step 1/1. Its function is as follows. Catalyzes the acyloin condensation reaction between C atoms 2 and 3 of pyruvate and glyceraldehyde 3-phosphate to yield 1-deoxy-D-xylulose-5-phosphate (DXP). This chain is 1-deoxy-D-xylulose-5-phosphate synthase, found in Chlorobium phaeovibrioides (strain DSM 265 / 1930) (Prosthecochloris vibrioformis (strain DSM 265)).